The sequence spans 227 residues: PKHD-type hydroxylase azo0608 (227 aa).

A Fe2OG dioxygenase domain is found at 78-178 (RVLTPFFNRY…RVACFMFMQS (101 aa)). The Fe cation site is built by His-97, Asp-99, and His-159. Position 169 (Arg-169) interacts with 2-oxoglutarate.

It depends on Fe(2+) as a cofactor. L-ascorbate is required as a cofactor.

This chain is PKHD-type hydroxylase azo0608, found in Azoarcus sp. (strain BH72).